The chain runs to 1142 residues: Collagen alpha-1(XIX) chain (1142 aa).

The N-terminal stretch at 1 to 23 (MRLTGPWKLWLWMSIFLLPASTS) is a signal peptide. Positions 50–234 (NKLEVSGFDL…LHQLKIYCSA (185 aa)) constitute a Laminin G-like domain. 3 disordered regions span residues 288–680 (IPNK…GDPI), 704–1009 (PGLK…PGIP), and 1053–1142 (YGRP…TGGN). 3 consecutive Collagen-like domains span residues 292–349 (GEAG…GEKG), 350–391 (DPAL…ALPG), and 392–433 (SLGI…GIQG). The segment at 292-351 (GEAGLPGAPGSPGQKGHKGEPGENGLHGAPGFPGQKGEQGFEGSKGETGEKGEQGEKGDP) is triple-helical region 1 (COL1). The segment covering 335–350 (SKGETGEKGEQGEKGD) has biased composition (basic and acidic residues). Positions 370-429 (GPPGPKGEKGDTGPPGPPALPGSLGIQGPQGPPGKEGQRGRRGKTGPPGKPGPPGPPGPP) are triple-helical region 2 (COL2). Residues 390–404 (PGSLGIQGPQGPPGK) show a composition bias toward low complexity. Over residues 417–429 (PGKPGPPGPPGPP) the composition is skewed to pro residues. 2 stretches are compositionally biased toward basic and acidic residues: residues 444-463 (KDNK…DKGE) and 478-496 (QKGE…DRGE). The interval 448 to 688 (GNDEHEAGGL…PIALPLLGDI (241 aa)) is triple-helical region 3 (COL3). Collagen-like domains lie at 474-516 (GPKG…GPPG), 568-624 (GPPG…GPQG), 626-678 (GIPG…PPGD), 728-778 (KGDI…APGP), 779-814 (TGPP…PPGP), 845-903 (GPPG…VPGE), 904-947 (PGER…GDRG), and 948-1004 (PKGE…GSPG). Positions 640-651 (PGIQGPRGLPGL) are enriched in low complexity. The tract at residues 700–818 (QASVPGLKSN…PGPPGPPGIP (119 aa)) is triple-helical region 4 (COL4). Basic and acidic residues-rich tracts occupy residues 720–731 (GKYDSMARKGDI) and 743–752 (EGPKGSKGER). Pro residues-rich tracts occupy residues 806-817 (PGKPGPPGPPGI) and 840-852 (YPGP…PKGD). Residues 833-1012 (GGVNVPSYPG…PGIPGIPADA (180 aa)) are triple-helical region 5 (COL5). Over residues 943 to 954 (PGDRGPKGERGD) the composition is skewed to basic and acidic residues. Positions 952–954 (RGD) match the Cell attachment site motif. A triple-helical region 6 (COL6) region spans residues 1054-1111 (GRPGPPGKDGLPGPPGDPGPQGYRGQKGERGEPGIGLPGSPGLPGTSALGLPGSPGAP). Residues 1093–1107 (SPGLPGTSALGLPGS) show a composition bias toward low complexity. Positions 1108–1119 (PGAPGPQGPPGP) are enriched in pro residues.

Belongs to the fibril-associated collagens with interrupted helices (FACIT) family. Oligomer; disulfide-linked. In terms of processing, prolines at the third position of the tripeptide repeating unit (G-X-Y) are hydroxylated in some or all of the chains. Localized to vascular, neuronal, mesenchymal, and some epithelial basement membrane zones in umbilical cord.

Its subcellular location is the secreted. It localises to the extracellular space. It is found in the extracellular matrix. In terms of biological role, may act as a cross-bridge between fibrils and other extracellular matrix molecules. Involved in skeletal myogenesis in the developing esophagus. May play a role in organization of the pericellular matrix or the sphinteric smooth muscle. This is Collagen alpha-1(XIX) chain (COL19A1) from Homo sapiens (Human).